The primary structure comprises 348 residues: Phosphoribosylformylglycinamidine cyclo-ligase (348 aa).

This sequence belongs to the AIR synthase family.

Its subcellular location is the cytoplasm. The enzyme catalyses 2-formamido-N(1)-(5-O-phospho-beta-D-ribosyl)acetamidine + ATP = 5-amino-1-(5-phospho-beta-D-ribosyl)imidazole + ADP + phosphate + H(+). It functions in the pathway purine metabolism; IMP biosynthesis via de novo pathway; 5-amino-1-(5-phospho-D-ribosyl)imidazole from N(2)-formyl-N(1)-(5-phospho-D-ribosyl)glycinamide: step 2/2. The chain is Phosphoribosylformylglycinamidine cyclo-ligase from Sorangium cellulosum (strain So ce56) (Polyangium cellulosum (strain So ce56)).